Consider the following 187-residue polypeptide: Phosphatidylethanolamine-binding protein 1 (187 aa).

Residue Ala-2 is modified to N-acetylalanine; in peptide hippocampal cholinergic neurostimulating. Ser-6 and Ser-13 each carry phosphoserine. Thr-42 carries the phosphothreonine modification. Residues Ser-52, Ser-54, Ser-98, and Ser-153 each carry the phosphoserine modification. The interaction with RAF1 stretch occupies residues 93–134 (KGNDISSGTVLSEYVGSGPPKDTGLHRYVWLVYEQEQPLNCD).

Belongs to the phosphatidylethanolamine-binding protein family. In terms of assembly, has a tendency to form dimers by disulfide cross-linking. Interacts with RAF1 and this interaction is enhanced if RAF1 is phosphorylated on residues 'Ser-338', 'Ser-339', 'Tyr-340' and 'Tyr-341'. Interacts with ALOX15; in response to IL13/interleukin-13, prevents the interaction of PEBP1 with RAF1 to activate the ERK signaling cascade. In terms of tissue distribution, major component of epididymal secretions and sperm plasma membranes. It is present in cytosols from a variety of other tissues. Highly expressed in brain.

It localises to the cytoplasm. It is found in the membrane. Its function is as follows. Binds ATP, opioids and phosphatidylethanolamine. Has lower affinity for phosphatidylinositol and phosphatidylcholine. Serine protease inhibitor which inhibits thrombin, neuropsin and chymotrypsin but not trypsin, tissue type plasminogen activator and elastase. Inhibits the kinase activity of RAF1 by inhibiting its activation and by dissociating the RAF1/MEK complex and acting as a competitive inhibitor of MEK phosphorylation. HCNP may be involved in the function of the presynaptic cholinergic neurons of the central nervous system. HCNP increases the production of choline acetyltransferase but not acetylcholinesterase. Seems to be mediated by a specific receptor. The protein is Phosphatidylethanolamine-binding protein 1 (Pebp1) of Rattus norvegicus (Rat).